The sequence spans 446 residues: Alkylglycerol monooxygenase (446 aa).

A run of 2 helical transmembrane segments spans residues 39–59 (VNQA…LGWL) and 103–123 (FHFL…FLGV). Residues 117–248 (WLAFLGVDMG…LIIWDRMFGT (132 aa)) form the Fatty acid hydroxylase domain. The Histidine box-1 signature appears at 131-135 (HRFAH). A Histidine box-2 motif is present at residues 144-148 (HQVHH). The helical transmembrane segment at 167–187 (FSSWIFYSPLALLIPPSVFAV) threads the bilayer. The short motif at 220 to 224 (HRVHH) is the Histidine box-3 element. 3 consecutive transmembrane segments (helical) span residues 329–349 (AWSP…LDVY), 362–382 (LTVI…GFLI), and 410–430 (PLLP…TIYW).

The protein belongs to the sterol desaturase family. TMEM195 subfamily. Requires Fe cation as cofactor.

It localises to the endoplasmic reticulum membrane. It catalyses the reaction 1-O-(1,2-saturated-alkyl)-sn-glycerol + (6R)-L-erythro-5,6,7,8-tetrahydrobiopterin + O2 = a 1-(1-hydroxyalkyl)-sn-glycerol + (6R)-L-erythro-6,7-dihydrobiopterin + H2O. In terms of biological role, glyceryl-ether monooxygenase that cleaves the O-alkyl bond of ether lipids. Ether lipids are essential components of brain membranes. The protein is Alkylglycerol monooxygenase (agmo) of Danio rerio (Zebrafish).